A 197-amino-acid polypeptide reads, in one-letter code: 3-isopropylmalate dehydratase small subunit (197 aa).

This sequence belongs to the LeuD family. LeuD type 1 subfamily. In terms of assembly, heterodimer of LeuC and LeuD.

The enzyme catalyses (2R,3S)-3-isopropylmalate = (2S)-2-isopropylmalate. The protein operates within amino-acid biosynthesis; L-leucine biosynthesis; L-leucine from 3-methyl-2-oxobutanoate: step 2/4. Its function is as follows. Catalyzes the isomerization between 2-isopropylmalate and 3-isopropylmalate, via the formation of 2-isopropylmaleate. In Streptomyces avermitilis (strain ATCC 31267 / DSM 46492 / JCM 5070 / NBRC 14893 / NCIMB 12804 / NRRL 8165 / MA-4680), this protein is 3-isopropylmalate dehydratase small subunit.